Here is a 297-residue protein sequence, read N- to C-terminus: MEGALQVCRNCKRRVASNHLGLHEAHCLMYLVLCPECKEPVLQHEMEEHCQGGHQQVGCAMCQQSVPKHSLDSHEAQECQERPVECQFCQLAVRLNKVDLHEHHCGQQTELCPDCGQHVMLRVLARHREECQREQLRLQKGKSIPVPESNICCHYCNQMIPGNKYFHHLDRCRRVSGAVTPSPVGKPEIPPSSPLSWAAEDQTSKAEKDVRPKLKNRHRAPFLSEKSTRQAPRGTNKTTNLSLKSNGKLRASSPVEDETAYDILRRCSQCDILLPLPTLNHHQEKCRRLASSKGKQV.

The TRAF-type zinc-finger motif lies at 22–99 (LHEAHCLMYL…QLAVRLNKVD (78 aa)). The interval 178–255 (AVTPSPVGKP…NGKLRASSPV (78 aa)) is disordered. Positions 202 to 212 (QTSKAEKDVRP) are enriched in basic and acidic residues. Positions 229–245 (RQAPRGTNKTTNLSLKS) are enriched in polar residues.

In terms of assembly, interacts with BIRC1, BIRC2, BIRC3, BIRC4, BIRC7 and BIRC8. Part of an complex consisting of BIRC4, XAF1 and BIRC5; the complex formation requires IFN-beta stimulation. Interacts with RNF114, the interaction increases XAF1 stability and proapoptotic effects, and may regulate IFN signaling.

The protein resides in the cytoplasm. It localises to the nucleus. Its subcellular location is the mitochondrion. Its function is as follows. Seems to function as a negative regulator of members of the IAP (inhibitor of apoptosis protein) family. Inhibits anti-caspase activity of BIRC4. Induces cleavage and inactivation of BIRC4 independent of caspase activation. Mediates TNF-alpha-induced apoptosis and is involved in apoptosis in trophoblast cells. May inhibit BIRC4 indirectly by activating the mitochondrial apoptosis pathway. After translocation to mitochondria, promotes translocation of BAX to mitochondria and cytochrome c release from mitochondria. Seems to promote the redistribution of BIRC4 from the cytoplasm to the nucleus, probably independent of BIRC4 inactivation which seems to occur in the cytoplasm. The BIRC4-XAF1 complex mediates down-regulation of BIRC5/survivin; the process requires the E3 ligase activity of BIRC4. Seems to be involved in cellular sensitivity to the proapoptotic actions of TRAIL. May be a tumor suppressor by mediating apoptosis resistance of cancer cells. The polypeptide is XIAP-associated factor 1 (XAF1) (Bos taurus (Bovine)).